We begin with the raw amino-acid sequence, 247 residues long: MSENMAYECLKYSNENINRALEALRAGKMIQIYDSDSREGETDLVIPAKAVTYTDVKWMRKDAGGLICVAVDPVASKQLKLPFMADLVREASKTSDSLGEVVEKDGDLKYDAHSSFSLWVNHRDTRTGIPDIERALTIRKIGEITEESLSGNGVRFGNEFRTPGHVALLRAAEGLLDERMGQTELSVALARMAGITPAMVVCEMLDDDSGKALSKEKSKEYGKEHGLVFLEGREIVEAYLLWAGTDC.

D-ribulose 5-phosphate is bound by residues 38 to 39 (RE), D43, 179 to 183 (RMGQT), and E203. Residue E39 participates in Mg(2+) binding.

It belongs to the DHBP synthase family. Homodimer. The cofactor is Mg(2+). Requires Mn(2+) as cofactor.

The catalysed reaction is D-ribulose 5-phosphate = (2S)-2-hydroxy-3-oxobutyl phosphate + formate + H(+). Its pathway is cofactor biosynthesis; riboflavin biosynthesis; 2-hydroxy-3-oxobutyl phosphate from D-ribulose 5-phosphate: step 1/1. Functionally, catalyzes the conversion of D-ribulose 5-phosphate to formate and 3,4-dihydroxy-2-butanone 4-phosphate. This chain is 3,4-dihydroxy-2-butanone 4-phosphate synthase, found in Methanosarcina mazei (strain ATCC BAA-159 / DSM 3647 / Goe1 / Go1 / JCM 11833 / OCM 88) (Methanosarcina frisia).